The chain runs to 2254 residues: MDEEEDGAGAEESGQPRSFTQLNDLSGAGGRQGPGSTEKDPGSADSEAEGLPYPALAPVVFFYLSQDSRPRSWCLRTVCNPWFERVSMLVILLNCVTLGMFRPCEDIACDSQRCRILQAFDDFIFAFFAVEMVVKMVALGIFGKKCYLGDTWNRLDFFIVIAGMLEYSLDLQNVSFSAVRTVRVLRPLRAINRVPSMRILVTLLLDTLPMLGNVLLLCFFVFFIFGIVGVQLWAGLLRNRCFLPENFSLPLSVDLEPYYQTENEDESPFICSQPRENGMRSCRSVPTLRGEGGGGPPCSLDYETYNSSSNTTCVNWNQYYTNCSAGEHNPFKGAINFDNIGYAWIAIFQVITLEGWVDIMYFVMDAHSFYNFIYFILLIIVGSFFMINLCLVVIATQFSETKQRESQLMREQRVRFLSNASTLASFSEPGSCYEELLKYLVYILRKAARRLAQVSRAIGVRAGLLSSPVARSGQEPQPSGSCTRSHRRLSVHHLVHHHHHHHHHYHLGNGTLRVPRASPEIQDRDANGSRRLMLPPPSTPTPSGGPPRGAESVHSFYHADCHLEPVRCQAPPPRCPSEASGRTVGSGKVYPTVHTSPPPEILKDKALVEVAPSPGPPTLTSFNIPPGPFSSMHKLLETQSTGACHSSCKISSPCSKADSGACGPDSCPYCARTGAGEPESADHVMPDSDSEAVYEFTQDAQHSDLRDPHSRRRQRSLGPDAEPSSVLAFWRLICDTFRKIVDSKYFGRGIMIAILVNTLSMGIEYHEQPEELTNALEISNIVFTSLFALEMLLKLLVYGPFGYIKNPYNIFDGVIVVISVWEIVGQQGGGLSVLRTFRLMRVLKLVRFLPALQRQLVVLMKTMDNVATFCMLLMLFIFIFSILGMHLFGCKFASERDGDTLPDRKNFDSLLWAIVTVFQILTQEDWNKVLYNGMASTSSWAALYFIALMTFGNYVLFNLLVAILVEGFQAEGDATKSESEPDFFSPSVDGDGDRKKRLALVALGEHAELRKSLLPPLIIHTAATPMSHPKSSSTGVGEALGSGSRRTSSSGSAEPGAAHHEMKCPPSARSSPHSPWSAASSWTSRRSSRNSLGRAPSLKRRSPSGERRSLLSGEGQESQDEEESSEEDRASPAGSDHRHRGSLEREAKSSFDLPDTLQVPGLHRTASGRSSASEHQDCNGKSASGRLARTLRTDDPQLDGDDDNDEGNLSKGERIQAWVRSRLPACCRERDSWSAYIFPPQSRFRLLCHRIITHKMFDHVVLVIIFLNCITIAMERPKIDPHSAERIFLTLSNYIFTAVFLAEMTVKVVALGWCFGEQAYLRSSWNVLDGLLVLISVIDILVSMVSDSGTKILGMLRVLRLLRTLRPLRVISRAQGLKLVVETLMSSLKPIGNIVVICCAFFIIFGILGVQLFKGKFFVCQGEDTRNITNKSDCAEASYRWVRHKYNFDNLGQALMSLFVLASKDGWVDIMYDGLDAVGVDQQPIMNHNPWMLLYFISFLLIVAFFVLNMFVGVVVENFHKCRQHQEEEEARRREEKRLRRLEKKRRSKEKQMAEAQCKPYYSDYSRFRLLVHHLCTSHYLDLFITGVIGLNVVTMAMEHYQQPQILDEALKICNYIFTVIFVFESVFKLVAFGFRRFFQDRWNQLDLAIVLLSIMGITLEEIEVNLSLPINPTIIRIMRVLRIARVLKLLKMAVGMRALLHTVMQALPQVGNLGLLFMLLFFIFAALGVELFGDLECDETHPCEGLGRHATFRNFGMAFLTLFRVSTGDNWNGIMKDTLRDCDQESTCYNTVISPIYFVSFVLTAQFVLVNVVIAVLMKHLEESNKEAKEEAELEAELELEMKTLSPQPHSPLGSPFLWPGVEGVNSTDSPKPGAPHTTAHIGAASGFSLEHPTMVPHPEEVPVPLGPDLLTVRKSGVSRTHSLPNDSYMCRNGSTAERSLGHRGWGLPKAQSGSILSVHSQPADTSCILQLPKDVHYLLQPHGAPTWGAIPKLPPPGRSPLAQRPLRRQAAIRTDSLDVQGLGSREDLLSEVSGPSCPLTRSSSFWGGSSIQVQQRSGIQSKVSKHIRLPAPCPGLEPSWAKDPPETRSSLELDTELSWISGDLLPSSQEEPLFPRDLKKCYSVETQSCRRRPGFWLDEQRRHSIAVSCLDSGSQPRLCPSPSSLGGQPLGGPGSRPKKKLSPPSISIDPPESQGSRPPCSPGVCLRRRAPASDSKDPSVSSPLDSTAASPSPKKDTLSLSGLSSDPTDMDP.

Positions 1 to 48 are disordered; sequence MDEEEDGAGAEESGQPRSFTQLNDLSGAGGRQGPGSTEKDPGSADSEA. Over 1–80 the chain is Cytoplasmic; the sequence is MDEEEDGAGA…RSWCLRTVCN (80 aa). Residues 15 to 24 show a composition bias toward polar residues; it reads QPRSFTQLND. One copy of the I repeat lies at 68–398; sequence SRPRSWCLRT…LCLVVIATQF (331 aa). The helical transmembrane segment at 81-101 threads the bilayer; it reads PWFERVSMLVILLNCVTLGMF. Residues 102-119 lie on the Extracellular side of the membrane; it reads RPCEDIACDSQRCRILQA. The chain crosses the membrane as a helical span at residues 120–141; the sequence is FDDFIFAFFAVEMVVKMVALGI. The Cytoplasmic portion of the chain corresponds to 142-150; the sequence is FGKKCYLGD. Residues 151-170 form a helical membrane-spanning segment; it reads TWNRLDFFIVIAGMLEYSLD. Over 171–175 the chain is Extracellular; it reads LQNVS. N173 carries an N-linked (GlcNAc...) asparagine glycan. A helical membrane pass occupies residues 176-193; sequence FSAVRTVRVLRPLRAINR. Over 194-213 the chain is Cytoplasmic; that stretch reads VPSMRILVTLLLDTLPMLGN. The chain crosses the membrane as a helical span at residues 214–234; sequence VLLLCFFVFFIFGIVGVQLWA. The Extracellular portion of the chain corresponds to 235–370; it reads GLLRNRCFLP…YFVMDAHSFY (136 aa). 4 N-linked (GlcNAc...) asparagine glycosylation sites follow: N246, N306, N310, and N322. A helical membrane pass occupies residues 371-395; it reads NFIYFILLIIVGSFFMINLCLVVIA. Residues 396–744 are Cytoplasmic-facing; that stretch reads TQFSETKQRE…DTFRKIVDSK (349 aa). Residue S467 is modified to Phosphoserine. Residues 494 to 506 show a composition bias toward basic residues; the sequence is LVHHHHHHHHHYH. 4 disordered regions span residues 494 to 513, 525 to 553, 579 to 598, and 699 to 721; these read LVHH…GTLR, DANG…AESV, ASGR…TSPP, and DAQH…GPDA. Residues 534-545 show a composition bias toward pro residues; it reads LPPPSTPTPSGG. Phosphoserine is present on S716. An II repeat occupies 730 to 968; the sequence is WRLICDTFRK…LLVAILVEGF (239 aa). Residues 745–765 traverse the membrane as a helical segment; the sequence is YFGRGIMIAILVNTLSMGIEY. The Extracellular portion of the chain corresponds to 766-778; the sequence is HEQPEELTNALEI. A helical transmembrane segment spans residues 779–800; it reads SNIVFTSLFALEMLLKLLVYGP. Topologically, residues 801-806 are cytoplasmic; sequence FGYIKN. Residues 807–825 form a helical membrane-spanning segment; sequence PYNIFDGVIVVISVWEIVG. Topologically, residues 826–833 are extracellular; sequence QQGGGLSV. Residues 834–857 traverse the membrane as a helical segment; it reads LRTFRLMRVLKLVRFLPALQRQLV. Topologically, residues 858–868 are cytoplasmic; that stretch reads VLMKTMDNVAT. Residues 869–889 traverse the membrane as a helical segment; it reads FCMLLMLFIFIFSILGMHLFG. At 890–940 the chain is on the extracellular side; it reads CKFASERDGDTLPDRKNFDSLLWAIVTVFQILTQEDWNKVLYNGMASTSSW. The chain crosses the membrane as a helical span at residues 941 to 965; sequence AALYFIALMTFGNYVLFNLLVAILV. Over 966–1251 the chain is Cytoplasmic; it reads EGFQAEGDAT…SRFRLLCHRI (286 aa). A disordered region spans residues 1024–1209; the sequence is TPMSHPKSSS…GDDDNDEGNL (186 aa). 2 stretches are compositionally biased toward low complexity: residues 1041-1052 and 1065-1091; these read GSGSRRTSSSGS and PPSA…SRNS. 2 stretches are compositionally biased toward acidic residues: residues 1117-1126 and 1196-1206; these read ESQDEEESSE and PQLDGDDDNDE. Residues S1118, S1124, and S1125 each carry the phosphoserine modification. The stretch at 1242–1519 is one III repeat; the sequence is SRFRLLCHRI…MFVGVVVENF (278 aa). The helical transmembrane segment at 1252-1274 threads the bilayer; sequence ITHKMFDHVVLVIIFLNCITIAM. The Extracellular segment spans residues 1275–1292; that stretch reads ERPKIDPHSAERIFLTLS. A helical membrane pass occupies residues 1293 to 1313; sequence NYIFTAVFLAEMTVKVVALGW. Residues 1314–1323 lie on the Cytoplasmic side of the membrane; that stretch reads CFGEQAYLRS. The chain crosses the membrane as a helical span at residues 1324 to 1343; it reads SWNVLDGLLVLISVIDILVS. At 1344-1357 the chain is on the extracellular side; that stretch reads MVSDSGTKILGMLR. A helical membrane pass occupies residues 1358–1379; it reads VLRLLRTLRPLRVISRAQGLKL. The Cytoplasmic portion of the chain corresponds to 1380 to 1389; the sequence is VVETLMSSLK. A helical membrane pass occupies residues 1390-1413; that stretch reads PIGNIVVICCAFFIIFGILGVQLF. Residues 1414–1490 lie on the Extracellular side of the membrane; the sequence is KGKFFVCQGE…DQQPIMNHNP (77 aa). N-linked (GlcNAc...) asparagine glycosylation is found at N1427 and N1430. The helical transmembrane segment at 1491 to 1516 threads the bilayer; that stretch reads WMLLYFISFLLIVAFFVLNMFVGVVV. Residues 1517–1578 lie on the Cytoplasmic side of the membrane; the sequence is ENFHKCRQHQ…RLLVHHLCTS (62 aa). An IV repeat occupies 1564-1822; sequence DYSRFRLLVH…VVIAVLMKHL (259 aa). The chain crosses the membrane as a helical span at residues 1579–1599; the sequence is HYLDLFITGVIGLNVVTMAME. Residues 1600 to 1613 lie on the Extracellular side of the membrane; the sequence is HYQQPQILDEALKI. A helical membrane pass occupies residues 1614 to 1635; sequence CNYIFTVIFVFESVFKLVAFGF. The Cytoplasmic segment spans residues 1636 to 1642; the sequence is RRFFQDR. A helical membrane pass occupies residues 1643–1661; sequence WNQLDLAIVLLSIMGITLE. The Extracellular portion of the chain corresponds to 1662–1675; the sequence is EIEVNLSLPINPTI. An N-linked (GlcNAc...) asparagine glycan is attached at N1666. The helical transmembrane segment at 1676 to 1699 threads the bilayer; that stretch reads IRIMRVLRIARVLKLLKMAVGMRA. At 1700–1713 the chain is on the cytoplasmic side; the sequence is LLHTVMQALPQVGN. Residues 1714 to 1734 form a helical membrane-spanning segment; that stretch reads LGLLFMLLFFIFAALGVELFG. Topologically, residues 1735–1794 are extracellular; it reads DLECDETHPCEGLGRHATFRNFGMAFLTLFRVSTGDNWNGIMKDTLRDCDQESTCYNTVI. Residues 1795–1822 traverse the membrane as a helical segment; that stretch reads SPIYFVSFVLTAQFVLVNVVIAVLMKHL. Topologically, residues 1823–2254 are cytoplasmic; sequence EESNKEAKEE…LSSDPTDMDP (432 aa). The disordered stretch occupies residues 2153–2254; it reads DSGSQPRLCP…LSSDPTDMDP (102 aa). A compositionally biased stretch (low complexity) spans 2184 to 2193; that stretch reads SPPSISIDPP. Composition is skewed to polar residues over residues 2220–2232 and 2240–2254; these read PSVS…TAAS and LSLS…DMDP.

Belongs to the calcium channel alpha-1 subunit (TC 1.A.1.11) family. CACNA1G subfamily. In response to raising of intracellular calcium, the T-type channels are activated by CaM-kinase II. Highly expressed in brain. Moderate expression in heart; low expression in placenta, kidney and lung.

The protein localises to the cell membrane. The protein resides in the cytoplasm. It catalyses the reaction Ca(2+)(in) = Ca(2+)(out). Voltage-sensitive calcium channels (VSCC) mediate the entry of calcium ions into excitable cells and are also involved in a variety of calcium-dependent processes, including muscle contraction, hormone or neurotransmitter release, gene expression, cell motility, cell division and cell death. The isoform alpha-1G gives rise to T-type calcium currents. T-type calcium channels belong to the 'low-voltage activated (LVA)' group and are strongly blocked by nickel and mibefradil. A particularity of this type of channels is an opening at quite negative potentials and a voltage-dependent inactivation. T-type channels serve pacemaking functions in both central neurons and cardiac nodal cells and support calcium signaling in secretory cells and vascular smooth muscle. They may also be involved in the modulation of firing patterns of neurons which is important for information processing as well as in cell growth processes. This chain is Voltage-dependent T-type calcium channel subunit alpha-1G (Cacna1g), found in Rattus norvegicus (Rat).